Here is a 358-residue protein sequence, read N- to C-terminus: 1-deoxy-D-xylulose 5-phosphate reductoisomerase (358 aa).

NADPH-binding residues include threonine 7, glycine 8, serine 9, isoleucine 10, glycine 31, asparagine 33, and asparagine 114. Lysine 115 contacts 1-deoxy-D-xylulose 5-phosphate. An NADPH-binding site is contributed by glutamate 116. Residue aspartate 134 coordinates Mn(2+). 1-deoxy-D-xylulose 5-phosphate is bound by residues serine 135, glutamate 136, serine 157, and histidine 180. Glutamate 136 is a binding site for Mn(2+). Glycine 186 contributes to the NADPH binding site. 1-deoxy-D-xylulose 5-phosphate contacts are provided by serine 193, asparagine 198, lysine 199, and glutamate 202. Residue glutamate 202 coordinates Mn(2+).

Belongs to the DXR family. Mg(2+) serves as cofactor. Mn(2+) is required as a cofactor.

The enzyme catalyses 2-C-methyl-D-erythritol 4-phosphate + NADP(+) = 1-deoxy-D-xylulose 5-phosphate + NADPH + H(+). The protein operates within isoprenoid biosynthesis; isopentenyl diphosphate biosynthesis via DXP pathway; isopentenyl diphosphate from 1-deoxy-D-xylulose 5-phosphate: step 1/6. Functionally, catalyzes the NADPH-dependent rearrangement and reduction of 1-deoxy-D-xylulose-5-phosphate (DXP) to 2-C-methyl-D-erythritol 4-phosphate (MEP). This Wolinella succinogenes (strain ATCC 29543 / DSM 1740 / CCUG 13145 / JCM 31913 / LMG 7466 / NCTC 11488 / FDC 602W) (Vibrio succinogenes) protein is 1-deoxy-D-xylulose 5-phosphate reductoisomerase.